Here is a 902-residue protein sequence, read N- to C-terminus: Protein translocase subunit SecA (902 aa).

ATP contacts are provided by residues Gln-87, 105–109, and Asp-512; that span reads GEGKT. Disordered regions lie at residues 565–584 and 840–902; these read RRID…PGSS and VEEQ…GKLK. Basic and acidic residues-rich tracts occupy residues 840–859 and 873–882; these read VEEQ…HEDA and QVREGAKVGR. Residues Cys-886, Cys-888, Cys-897, and His-898 each coordinate Zn(2+). Over residues 892–902 the composition is skewed to basic residues; the sequence is KKYKQCHGKLK.

The protein belongs to the SecA family. Monomer and homodimer. Part of the essential Sec protein translocation apparatus which comprises SecA, SecYEG and auxiliary proteins SecDF-YajC and YidC. Requires Zn(2+) as cofactor.

It is found in the cell inner membrane. The protein localises to the cytoplasm. It catalyses the reaction ATP + H2O + cellular proteinSide 1 = ADP + phosphate + cellular proteinSide 2.. Its function is as follows. Part of the Sec protein translocase complex. Interacts with the SecYEG preprotein conducting channel. Has a central role in coupling the hydrolysis of ATP to the transfer of proteins into and across the cell membrane, serving both as a receptor for the preprotein-SecB complex and as an ATP-driven molecular motor driving the stepwise translocation of polypeptide chains across the membrane. The sequence is that of Protein translocase subunit SecA from Alteromonas mediterranea (strain DSM 17117 / CIP 110805 / LMG 28347 / Deep ecotype).